Consider the following 604-residue polypeptide: Kinesin-like protein KIN-14O (604 aa).

Residues 22 to 61 (MLNHDKDISALQEEISALRSRQRHLDHRRQEALDKLIDLK) adopt a coiled-coil conformation. The Kinesin motor domain maps to 63 to 387 (SIRVFCRVRP…LSFAKRARSI (325 aa)). ATP is bound at residue 141-148 (GQTGTGKT). Residues 383-443 (RARSIESSKE…EERKKLSSSA (61 aa)) are a coiled coil. Disordered regions lie at residues 465-511 (DSAE…KTRL) and 565-604 (SNNSIDSTAASAPRRRESFISRPAQRAPLHQHRRRMSSLT). The span at 565 to 574 (SNNSIDSTAA) shows a compositional bias: polar residues. Basic residues predominate over residues 593–604 (LHQHRRRMSSLT).

This sequence belongs to the TRAFAC class myosin-kinesin ATPase superfamily. Kinesin family. KIN-14 subfamily.

The chain is Kinesin-like protein KIN-14O from Oryza sativa subsp. japonica (Rice).